A 422-amino-acid chain; its full sequence is MDKIVIEGGVPLRGSVDVSGAKNAALPVIAAALLAEGEHEVRNVPDLADVRTLGKLLGHMGCEVARGEGDRRTVRLRVPAAVAPEAPYELVKTMRASVLVLGPLLARLGRARVSLPGGCAIGARPIDQHLKALTALGAEIRIEHGYVNATVPRGRLRGTVFTFDAQTVTGTENVMMAAALAEGETVLRNCAREPEVKDLGDALVAMGALVEGAGTDEIWIEGVPSLRPLSHAVIPDRIEAGTFLVAGALPGNDVTVRGCVAAHQEALVEKLRAVGAEVTKVEGGLRVVGDGRPRPVDVRTAPHPGFPTDMQAQLMVLLCLADGTSRITETVFENRFMHVQELIRLGAHVEVDGRVAMVKGVPELSGAPVMASDLRASAALVLAGLAASGTTEVLRVYHLDRGYERIEEKLAPLGARIRRVRG.

Residue 22-23 (KN) coordinates phosphoenolpyruvate. UDP-N-acetyl-alpha-D-glucosamine is bound at residue R95. Catalysis depends on C119, which acts as the Proton donor. C119 carries the post-translational modification 2-(S-cysteinyl)pyruvic acid O-phosphothioketal. UDP-N-acetyl-alpha-D-glucosamine is bound by residues 124-128 (RPIDQ), D309, and V331.

It belongs to the EPSP synthase family. MurA subfamily.

Its subcellular location is the cytoplasm. The enzyme catalyses phosphoenolpyruvate + UDP-N-acetyl-alpha-D-glucosamine = UDP-N-acetyl-3-O-(1-carboxyvinyl)-alpha-D-glucosamine + phosphate. Its pathway is cell wall biogenesis; peptidoglycan biosynthesis. Its function is as follows. Cell wall formation. Adds enolpyruvyl to UDP-N-acetylglucosamine. This is UDP-N-acetylglucosamine 1-carboxyvinyltransferase from Anaeromyxobacter sp. (strain K).